We begin with the raw amino-acid sequence, 312 residues long: Malate dehydrogenase (312 aa).

Residues 7 to 13 and D34 each bind NAD(+); that span reads GAAGGIG. Positions 81 and 87 each coordinate substrate. NAD(+) contacts are provided by residues N94 and 117-119; that span reads ITN. Positions 119 and 153 each coordinate substrate. The active-site Proton acceptor is H177. M227 lines the NAD(+) pocket.

Belongs to the LDH/MDH superfamily. MDH type 1 family. In terms of assembly, homodimer.

It catalyses the reaction (S)-malate + NAD(+) = oxaloacetate + NADH + H(+). Its function is as follows. Catalyzes the reversible oxidation of malate to oxaloacetate. In Escherichia coli (strain 55989 / EAEC), this protein is Malate dehydrogenase.